The chain runs to 307 residues: Transcription initiation factor IIF subunit beta (307 aa).

Over residues Met1–Glu12 the composition is skewed to basic and acidic residues. Disordered stretches follow at residues Met1–Asp22 and Val261–Val307. The segment covering Asp13–Asp22 has biased composition (acidic residues). A compositionally biased stretch (polar residues) spans Leu263 to Thr290. The span at Ala292–Val307 shows a compositional bias: acidic residues.

The protein belongs to the TFIIF beta subunit family. Component of the fcp1/TFIIF/polII complex via interaction of tfg3 with both tfg1/TFIIF-alpha and tfg2/TFIIF-beta subunits.

The protein resides in the nucleus. Its function is as follows. TFIIF is a general transcription initiation factor that binds to RNA polymerase II and helps to recruit it to the initiation complex in collaboration with TFIIB. It promotes transcription elongation. The protein is Transcription initiation factor IIF subunit beta (tfg2) of Schizosaccharomyces pombe (strain 972 / ATCC 24843) (Fission yeast).